Reading from the N-terminus, the 502-residue chain is Glycerol kinase (502 aa).

Position 14 (T14) interacts with ADP. ATP is bound by residues T14, T15, and S16. T14 is a binding site for sn-glycerol 3-phosphate. ADP is bound at residue R18. Sn-glycerol 3-phosphate-binding residues include R84, E85, Y136, and D246. Glycerol contacts are provided by R84, E85, Y136, D246, and Q247. ADP contacts are provided by T268 and G311. Positions 268, 311, 315, and 412 each coordinate ATP. Residues G412 and N416 each contribute to the ADP site.

The protein belongs to the FGGY kinase family. Homotetramer and homodimer (in equilibrium). Heterodimer with EIIA-Glc. Binds 1 zinc ion per glycerol kinase EIIA-Glc dimer. The zinc ion is important for dimerization.

The enzyme catalyses glycerol + ATP = sn-glycerol 3-phosphate + ADP + H(+). It participates in polyol metabolism; glycerol degradation via glycerol kinase pathway; sn-glycerol 3-phosphate from glycerol: step 1/1. Its activity is regulated as follows. Activity of this regulatory enzyme is affected by several metabolites. Allosterically and non-competitively inhibited by fructose 1,6-bisphosphate (FBP) and unphosphorylated phosphocarrier protein EIIA-Glc (III-Glc), an integral component of the bacterial phosphotransferase (PTS) system. In terms of biological role, key enzyme in the regulation of glycerol uptake and metabolism. Catalyzes the phosphorylation of glycerol to yield sn-glycerol 3-phosphate. This chain is Glycerol kinase, found in Enterobacter sp. (strain 638).